We begin with the raw amino-acid sequence, 218 residues long: Superoxide dismutase [Mn] 2, mitochondrial (218 aa).

The transit peptide at 1 to 24 (MLQSTARTASKLVQPVAGVLAVRS) directs the protein to the mitochondrion. Residues histidine 50, histidine 98, aspartate 179, and histidine 183 each contribute to the Mn(2+) site.

This sequence belongs to the iron/manganese superoxide dismutase family. In terms of assembly, homotetramer. The cofactor is Mn(2+). In terms of tissue distribution, expressed in pharynx and rectum. Upon thermal stress, expressed in vulva, body wall muscles and hypodermis.

It localises to the mitochondrion. The catalysed reaction is 2 superoxide + 2 H(+) = H2O2 + O2. Destroys superoxide anion radicals which are normally produced within the cells and which are toxic to biological systems. The chain is Superoxide dismutase [Mn] 2, mitochondrial (sod-3) from Caenorhabditis elegans.